We begin with the raw amino-acid sequence, 669 residues long: Heat shock 70 kDa protein BIP3 (669 aa).

Residues 1 to 32 (MARGATWTRRLHLHGLFLAVLLLLTLPAGSTA) form the signal peptide. Residue Asn-423 is glycosylated (N-linked (GlcNAc...) asparagine). The tract at residues 646-669 (AVYQRSGGSRRDGDGGGDDDHDEL) is disordered. The segment covering 660 to 669 (GGGDDDHDEL) has biased composition (acidic residues). Positions 666-669 (HDEL) match the Prevents secretion from ER motif.

The protein belongs to the heat shock protein 70 family.

The protein localises to the endoplasmic reticulum. In terms of biological role, functions as a chaperone during endoplasmic reticulum (ER) stress response. In Oryza sativa subsp. japonica (Rice), this protein is Heat shock 70 kDa protein BIP3.